Reading from the N-terminus, the 158-residue chain is Putative ribosomal RNA large subunit methyltransferase H (158 aa).

Residues Leu76, Gly107, and 126 to 131 each bind S-adenosyl-L-methionine; that span reads LSRMTF.

This sequence belongs to the RNA methyltransferase RlmH family.

Its subcellular location is the cytoplasm. It catalyses the reaction pseudouridine(1915) in 23S rRNA + S-adenosyl-L-methionine = N(3)-methylpseudouridine(1915) in 23S rRNA + S-adenosyl-L-homocysteine + H(+). Specifically methylates the pseudouridine at position 1915 (m3Psi1915) in 23S rRNA. This chain is Putative ribosomal RNA large subunit methyltransferase H, found in Methanocorpusculum labreanum (strain ATCC 43576 / DSM 4855 / Z).